A 259-amino-acid chain; its full sequence is Deoxyribose-phosphate aldolase (259 aa).

Asp-102 serves as the catalytic Proton donor/acceptor. Lys-167 serves as the catalytic Schiff-base intermediate with acetaldehyde. The Proton donor/acceptor role is filled by Lys-201.

It belongs to the DeoC/FbaB aldolase family. DeoC type 2 subfamily.

The protein resides in the cytoplasm. It catalyses the reaction 2-deoxy-D-ribose 5-phosphate = D-glyceraldehyde 3-phosphate + acetaldehyde. It participates in carbohydrate degradation; 2-deoxy-D-ribose 1-phosphate degradation; D-glyceraldehyde 3-phosphate and acetaldehyde from 2-deoxy-alpha-D-ribose 1-phosphate: step 2/2. In terms of biological role, catalyzes a reversible aldol reaction between acetaldehyde and D-glyceraldehyde 3-phosphate to generate 2-deoxy-D-ribose 5-phosphate. The protein is Deoxyribose-phosphate aldolase of Salmonella typhi.